We begin with the raw amino-acid sequence, 528 residues long: D-3-phosphoglycerate dehydrogenase (528 aa).

Residues 151 to 152 (RI), aspartate 171, 230 to 232 (AAR), and aspartate 256 each bind NAD(+). The active site involves arginine 232. Glutamate 261 is an active-site residue. The active-site Proton donor is the histidine 279. 279–282 (HLGA) contributes to the NAD(+) binding site. In terms of domain architecture, ACT spans 455–527 (NLIIHYVDRP…DAYKLEVVDL (73 aa)).

Belongs to the D-isomer specific 2-hydroxyacid dehydrogenase family.

The enzyme catalyses (2R)-3-phosphoglycerate + NAD(+) = 3-phosphooxypyruvate + NADH + H(+). The catalysed reaction is (R)-2-hydroxyglutarate + NAD(+) = 2-oxoglutarate + NADH + H(+). Its pathway is amino-acid biosynthesis; L-serine biosynthesis; L-serine from 3-phospho-D-glycerate: step 1/3. In terms of biological role, catalyzes the reversible oxidation of 3-phospho-D-glycerate to 3-phosphonooxypyruvate, the first step of the phosphorylated L-serine biosynthesis pathway. Also catalyzes the reversible oxidation of 2-hydroxyglutarate to 2-oxoglutarate. The chain is D-3-phosphoglycerate dehydrogenase (serA) from Mycobacterium bovis (strain ATCC BAA-935 / AF2122/97).